We begin with the raw amino-acid sequence, 277 residues long: 2-dehydro-3-deoxyphosphooctonate aldolase (277 aa).

This sequence belongs to the KdsA family.

The protein resides in the cytoplasm. It catalyses the reaction D-arabinose 5-phosphate + phosphoenolpyruvate + H2O = 3-deoxy-alpha-D-manno-2-octulosonate-8-phosphate + phosphate. Its pathway is carbohydrate biosynthesis; 3-deoxy-D-manno-octulosonate biosynthesis; 3-deoxy-D-manno-octulosonate from D-ribulose 5-phosphate: step 2/3. It functions in the pathway bacterial outer membrane biogenesis; lipopolysaccharide biosynthesis. The chain is 2-dehydro-3-deoxyphosphooctonate aldolase from Alkalilimnicola ehrlichii (strain ATCC BAA-1101 / DSM 17681 / MLHE-1).